Here is a 505-residue protein sequence, read N- to C-terminus: Protein DETOXIFICATION 50 (505 aa).

A run of 12 helical transmembrane segments spans residues 46–66, 78–98, 121–141, 155–175, 194–214, 219–239, 275–295, 305–325, 344–364, 380–400, 424–444, and 446–466; these read LVLTGLFLYVRSFVSLSFLGG, AAAFANITGYSLFSGLTMGVE, IILLLVTSLPVTLLWMNMEKI, AHIFLLYSVPDLVAQSFLHPL, IASFLHLPITFFLVSYLGLGI, LSGVVSNFNLVAFLFLYICFF, ISVCLEWWCYEIMILLCGFLL, GILIQITSLVYIFPHSLSLGV, AAIVGLGLSIALGFTAFAFTV, IMKLTAMALPIVGLCELGNCP, AFYAVGIPVGAVLAFWFGFGF, and GLWLGMLAAQITCVIGMMAAT.

Belongs to the multi antimicrobial extrusion (MATE) (TC 2.A.66.1) family. As to expression, preferentially expressed in rosette leaves. Detected mainly in the vascular tissues and guard cells. Mostly detected at reproductive stages in young anthers, in mature pollens and during pollen germination on the pistil. Also expressed in developing seeds.

Its subcellular location is the cell membrane. It localises to the late endosome membrane. Functionally, functions as a multidrug and toxin extrusion transporter in the export of abscisic acid (ABA) in guard cells. Plays a role in ABA-mediated growth inhibition and responses to drought conditions. May act as a negative regulator of hypocotyl cell elongation in the light. This is Protein DETOXIFICATION 50 from Arabidopsis thaliana (Mouse-ear cress).